Consider the following 734-residue polypeptide: Photosystem I P700 chlorophyll a apoprotein A2 (734 aa).

The next 8 membrane-spanning stretches (helical) occupy residues 46–69 (IFASHFGQLAIIFLWTSGNLFHVA), 135–158 (LYTGALFLLFLSAISLIAGWLHLQ), 175–199 (LNHHLSGLFGVSSLAWTGHLVHVAI), 273–291 (IAHHHLAIAFIFLVAGHMY), 330–353 (IHFQLGLALASLGVITSLVAQHMY), 369–395 (AALYTHHQYIAGFIMTGAFAHGAIFFI), 417–439 (AIISHLSWASLFLGFHTLGLYVH), and 517–535 (FLVHHAIALGLHTTTLILV). The [4Fe-4S] cluster site is built by cysteine 559 and cysteine 568. A run of 2 helical transmembrane segments spans residues 575–596 (AFYLAVFWMLNTIGWVTFYWHW) and 643–665 (LSVWAWMFLFGHLVWATGFMFLI). Chlorophyll a contacts are provided by histidine 654, methionine 662, and tyrosine 670. Tryptophan 671 lines the phylloquinone pocket. The chain crosses the membrane as a helical span at residues 707 to 727 (LVGLAHFSVGYIFTYAAFLIA).

The protein belongs to the PsaA/PsaB family. The PsaA/B heterodimer binds the P700 chlorophyll special pair and subsequent electron acceptors. PSI consists of a core antenna complex that captures photons, and an electron transfer chain that converts photonic excitation into a charge separation. The eukaryotic PSI reaction center is composed of at least 11 subunits. Requires P700 is a chlorophyll a/chlorophyll a' dimer, A0 is one or more chlorophyll a, A1 is one or both phylloquinones and FX is a shared 4Fe-4S iron-sulfur center. as cofactor.

Its subcellular location is the plastid. The protein resides in the chloroplast thylakoid membrane. The catalysed reaction is reduced [plastocyanin] + hnu + oxidized [2Fe-2S]-[ferredoxin] = oxidized [plastocyanin] + reduced [2Fe-2S]-[ferredoxin]. PsaA and PsaB bind P700, the primary electron donor of photosystem I (PSI), as well as the electron acceptors A0, A1 and FX. PSI is a plastocyanin-ferredoxin oxidoreductase, converting photonic excitation into a charge separation, which transfers an electron from the donor P700 chlorophyll pair to the spectroscopically characterized acceptors A0, A1, FX, FA and FB in turn. Oxidized P700 is reduced on the lumenal side of the thylakoid membrane by plastocyanin. The chain is Photosystem I P700 chlorophyll a apoprotein A2 from Vitis vinifera (Grape).